Here is a 145-residue protein sequence, read N- to C-terminus: D-aminoacyl-tRNA deacylase (145 aa).

The Gly-cisPro motif, important for rejection of L-amino acids signature appears at 137-138; it reads GP.

The protein belongs to the DTD family. In terms of assembly, homodimer.

It is found in the cytoplasm. The enzyme catalyses glycyl-tRNA(Ala) + H2O = tRNA(Ala) + glycine + H(+). It catalyses the reaction a D-aminoacyl-tRNA + H2O = a tRNA + a D-alpha-amino acid + H(+). Its function is as follows. An aminoacyl-tRNA editing enzyme that deacylates mischarged D-aminoacyl-tRNAs. Also deacylates mischarged glycyl-tRNA(Ala), protecting cells against glycine mischarging by AlaRS. Acts via tRNA-based rather than protein-based catalysis; rejects L-amino acids rather than detecting D-amino acids in the active site. By recycling D-aminoacyl-tRNA to D-amino acids and free tRNA molecules, this enzyme counteracts the toxicity associated with the formation of D-aminoacyl-tRNA entities in vivo and helps enforce protein L-homochirality. This Salmonella arizonae (strain ATCC BAA-731 / CDC346-86 / RSK2980) protein is D-aminoacyl-tRNA deacylase.